The following is a 53-amino-acid chain: Metallothionein (53 aa).

This sequence belongs to the metallothionein superfamily. Type 14 family.

In terms of biological role, this protein complexes cadmium, zinc and copper. This chain is Metallothionein, found in Synechococcus sp.